The sequence spans 576 residues: Proline--tRNA ligase (576 aa).

Belongs to the class-II aminoacyl-tRNA synthetase family. ProS type 1 subfamily. In terms of assembly, homodimer.

It localises to the cytoplasm. The catalysed reaction is tRNA(Pro) + L-proline + ATP = L-prolyl-tRNA(Pro) + AMP + diphosphate. Catalyzes the attachment of proline to tRNA(Pro) in a two-step reaction: proline is first activated by ATP to form Pro-AMP and then transferred to the acceptor end of tRNA(Pro). As ProRS can inadvertently accommodate and process non-cognate amino acids such as alanine and cysteine, to avoid such errors it has two additional distinct editing activities against alanine. One activity is designated as 'pretransfer' editing and involves the tRNA(Pro)-independent hydrolysis of activated Ala-AMP. The other activity is designated 'posttransfer' editing and involves deacylation of mischarged Ala-tRNA(Pro). The misacylated Cys-tRNA(Pro) is not edited by ProRS. The sequence is that of Proline--tRNA ligase from Helicobacter pylori (strain J99 / ATCC 700824) (Campylobacter pylori J99).